A 147-amino-acid polypeptide reads, in one-letter code: MAFFSIFKQGQIYLNTWPQEAKLGIIFPENRIMKATSFAQKFMPFVAVFAILWQQIYAKNDLMAFSIAILTALFALLIPFQGLYWLGKRANSPLENQSAVWFYDICERLKQQNEPLPFVQEKPTYQHLAEVLRKAQSKFERAFWQEI.

The next 2 membrane-spanning stretches (helical) occupy residues 38–58 (FAQK…QIYA) and 67–87 (IAIL…YWLG).

The protein belongs to the UPF0208 family.

It is found in the cell inner membrane. This chain is UPF0208 membrane protein CGSHiEE_06015, found in Haemophilus influenzae (strain PittEE).